The sequence spans 304 residues: Acetylglutamate kinase (304 aa).

Residues Gly-75 to Gly-76, Arg-97, and Asn-202 each bind substrate.

The protein belongs to the acetylglutamate kinase family. ArgB subfamily.

The protein resides in the cytoplasm. It catalyses the reaction N-acetyl-L-glutamate + ATP = N-acetyl-L-glutamyl 5-phosphate + ADP. It functions in the pathway amino-acid biosynthesis; L-arginine biosynthesis; N(2)-acetyl-L-ornithine from L-glutamate: step 2/4. Its function is as follows. Catalyzes the ATP-dependent phosphorylation of N-acetyl-L-glutamate. The sequence is that of Acetylglutamate kinase from Parvibaculum lavamentivorans (strain DS-1 / DSM 13023 / NCIMB 13966).